The sequence spans 163 residues: NADH-quinone oxidoreductase subunit I (163 aa).

4Fe-4S ferredoxin-type domains are found at residues 54 to 84 (LRRY…IESD) and 94 to 123 (TRYD…ETPI). Residues Cys64, Cys67, Cys70, Cys74, Cys103, Cys106, Cys109, and Cys113 each contribute to the [4Fe-4S] cluster site.

This sequence belongs to the complex I 23 kDa subunit family. As to quaternary structure, NDH-1 is composed of 14 different subunits. Subunits NuoA, H, J, K, L, M, N constitute the membrane sector of the complex. [4Fe-4S] cluster serves as cofactor.

Its subcellular location is the cell inner membrane. The enzyme catalyses a quinone + NADH + 5 H(+)(in) = a quinol + NAD(+) + 4 H(+)(out). Its function is as follows. NDH-1 shuttles electrons from NADH, via FMN and iron-sulfur (Fe-S) centers, to quinones in the respiratory chain. The immediate electron acceptor for the enzyme in this species is believed to be ubiquinone. Couples the redox reaction to proton translocation (for every two electrons transferred, four hydrogen ions are translocated across the cytoplasmic membrane), and thus conserves the redox energy in a proton gradient. The protein is NADH-quinone oxidoreductase subunit I of Cupriavidus pinatubonensis (strain JMP 134 / LMG 1197) (Cupriavidus necator (strain JMP 134)).